A 320-amino-acid chain; its full sequence is ATP-dependent 6-phosphofructokinase (320 aa).

An ATP-binding site is contributed by G12. Residues 22-26 and 55-60 contribute to the ADP site; these read RGVVR and RYSVSD. ATP is bound by residues 73-74 and 103-106; these read RF and GDGS. D104 contributes to the Mg(2+) binding site. 126–128 contributes to the substrate binding site; sequence TID. D128 acts as the Proton acceptor in catalysis. R155 lines the ADP pocket. Residues R163 and 170–172 contribute to the substrate site; that span reads MGR. ADP contacts are provided by residues 186–188, K212, and 214–216; these read GCE and KKH. Residues E223, R244, and 250 to 253 each bind substrate; that span reads HIQR.

It belongs to the phosphofructokinase type A (PFKA) family. ATP-dependent PFK group I subfamily. Prokaryotic clade 'B1' sub-subfamily. As to quaternary structure, homotetramer. Mg(2+) serves as cofactor.

Its subcellular location is the cytoplasm. It carries out the reaction beta-D-fructose 6-phosphate + ATP = beta-D-fructose 1,6-bisphosphate + ADP + H(+). It participates in carbohydrate degradation; glycolysis; D-glyceraldehyde 3-phosphate and glycerone phosphate from D-glucose: step 3/4. Allosterically activated by ADP and other diphosphonucleosides, and allosterically inhibited by phosphoenolpyruvate. Functionally, catalyzes the phosphorylation of D-fructose 6-phosphate to fructose 1,6-bisphosphate by ATP, the first committing step of glycolysis. This Escherichia fergusonii (strain ATCC 35469 / DSM 13698 / CCUG 18766 / IAM 14443 / JCM 21226 / LMG 7866 / NBRC 102419 / NCTC 12128 / CDC 0568-73) protein is ATP-dependent 6-phosphofructokinase.